We begin with the raw amino-acid sequence, 191 residues long: Guanylate kinase (191 aa).

The region spanning 9–187 (GQLIVITGPS…SLIALETAIF (179 aa)) is the Guanylate kinase-like domain. 16 to 23 (GPSGVGKG) is a binding site for ATP.

The protein belongs to the guanylate kinase family.

It localises to the cytoplasm. It catalyses the reaction GMP + ATP = GDP + ADP. Its function is as follows. Essential for recycling GMP and indirectly, cGMP. The sequence is that of Guanylate kinase from Thermosynechococcus vestitus (strain NIES-2133 / IAM M-273 / BP-1).